The following is a 225-amino-acid chain: Thymidine kinase (225 aa).

Position 15 to 22 (15 to 22 (GSMFSGKT)) interacts with ATP. The disordered stretch occupies residues 85–110 (KKQNHRTTTQCRSGDGTNNPGGVIPS). The span at 90–104 (RTTTQCRSGDGTNNP) shows a compositional bias: polar residues. ATP is bound at residue 121–124 (DEAN). Glu-122 (proton acceptor) is an active-site residue. Residues Cys-178, Cys-181, Cys-216, and Cys-219 each contribute to the Zn(2+) site.

This sequence belongs to the thymidine kinase family. Homotetramer.

It localises to the cytoplasm. The enzyme catalyses thymidine + ATP = dTMP + ADP + H(+). The chain is Thymidine kinase from Haloquadratum walsbyi (strain DSM 16790 / HBSQ001).